We begin with the raw amino-acid sequence, 166 residues long: Protein-export protein SecB (166 aa).

The protein belongs to the SecB family. As to quaternary structure, homotetramer, a dimer of dimers. One homotetramer interacts with 1 SecA dimer.

The protein resides in the cytoplasm. One of the proteins required for the normal export of preproteins out of the cell cytoplasm. It is a molecular chaperone that binds to a subset of precursor proteins, maintaining them in a translocation-competent state. It also specifically binds to its receptor SecA. This Roseobacter denitrificans (strain ATCC 33942 / OCh 114) (Erythrobacter sp. (strain OCh 114)) protein is Protein-export protein SecB.